Reading from the N-terminus, the 141-residue chain is Hemoglobin subunit beta-C (141 aa).

The 141-residue stretch at 1 to 141 (PNKALITGFW…VASALAHRYH (141 aa)) folds into the Globin domain. Residues histidine 58 and histidine 87 each contribute to the heme b site.

The protein belongs to the globin family. In terms of assembly, heterotetramer of two alpha chains and two beta chains. As to expression, red blood cells.

Its function is as follows. Involved in oxygen transport from the lung to the various peripheral tissues. The chain is Hemoglobin subunit beta-C from Ammotragus lervia (Barbary sheep).